A 221-amino-acid polypeptide reads, in one-letter code: MSDENLLTSLDTYLASGIHIGTQQKTEDMKRFIYRVRSDGLYVLDVRKTDERLRLAAKFLSNYEPQDIMAVTRRVYSVGPLKKFGETTGINTVAGRFVPGTLTNPAAKKFAEPEVMFLSDPRVDKQALKEAIEIGIPIVSMCDTEHLTAHLDFIIPTNNKGRKSVSLMYFLIAREYLKNRGIIGEEVPFSYDDFLEKAMGAKVKMPQQNQRGRPQRRFQRR.

Residues 202–221 (KVKMPQQNQRGRPQRRFQRR) are disordered.

Belongs to the universal ribosomal protein uS2 family.

The protein is Small ribosomal subunit protein uS2 of Methanococcus vannielii (strain ATCC 35089 / DSM 1224 / JCM 13029 / OCM 148 / SB).